The primary structure comprises 165 residues: Adenine phosphoribosyltransferase (165 aa).

It belongs to the purine/pyrimidine phosphoribosyltransferase family. As to quaternary structure, homodimer.

The protein resides in the cytoplasm. The catalysed reaction is AMP + diphosphate = 5-phospho-alpha-D-ribose 1-diphosphate + adenine. It participates in purine metabolism; AMP biosynthesis via salvage pathway; AMP from adenine: step 1/1. Catalyzes a salvage reaction resulting in the formation of AMP, that is energically less costly than de novo synthesis. This Bdellovibrio bacteriovorus (strain ATCC 15356 / DSM 50701 / NCIMB 9529 / HD100) protein is Adenine phosphoribosyltransferase.